A 130-amino-acid chain; its full sequence is Large ribosomal subunit protein uL22 (130 aa).

The protein belongs to the universal ribosomal protein uL22 family. Part of the 50S ribosomal subunit.

Its function is as follows. This protein binds specifically to 23S rRNA; its binding is stimulated by other ribosomal proteins, e.g. L4, L17, and L20. It is important during the early stages of 50S assembly. It makes multiple contacts with different domains of the 23S rRNA in the assembled 50S subunit and ribosome. The globular domain of the protein is located near the polypeptide exit tunnel on the outside of the subunit, while an extended beta-hairpin is found that lines the wall of the exit tunnel in the center of the 70S ribosome. The sequence is that of Large ribosomal subunit protein uL22 from Clavibacter michiganensis subsp. michiganensis (strain NCPPB 382).